Here is a 354-residue protein sequence, read N- to C-terminus: 3-dehydroquinate synthase (354 aa).

NAD(+) contacts are provided by residues 106–110 (GVIGD), 130–131 (TS), Lys-143, and Lys-152. Zn(2+) is bound by residues Glu-185, His-246, and His-262.

This sequence belongs to the sugar phosphate cyclases superfamily. Dehydroquinate synthase family. The cofactor is Co(2+). Zn(2+) serves as cofactor. Requires NAD(+) as cofactor.

It localises to the cytoplasm. The enzyme catalyses 7-phospho-2-dehydro-3-deoxy-D-arabino-heptonate = 3-dehydroquinate + phosphate. Its pathway is metabolic intermediate biosynthesis; chorismate biosynthesis; chorismate from D-erythrose 4-phosphate and phosphoenolpyruvate: step 2/7. Catalyzes the conversion of 3-deoxy-D-arabino-heptulosonate 7-phosphate (DAHP) to dehydroquinate (DHQ). This chain is 3-dehydroquinate synthase, found in Leuconostoc mesenteroides subsp. mesenteroides (strain ATCC 8293 / DSM 20343 / BCRC 11652 / CCM 1803 / JCM 6124 / NCDO 523 / NBRC 100496 / NCIMB 8023 / NCTC 12954 / NRRL B-1118 / 37Y).